Reading from the N-terminus, the 137-residue chain is Large ribosomal subunit protein uL16 (137 aa).

Belongs to the universal ribosomal protein uL16 family. As to quaternary structure, part of the 50S ribosomal subunit.

Its function is as follows. Binds 23S rRNA and is also seen to make contacts with the A and possibly P site tRNAs. The protein is Large ribosomal subunit protein uL16 of Rhizobium meliloti (strain 1021) (Ensifer meliloti).